Here is a 751-residue protein sequence, read N- to C-terminus: Photosystem I P700 chlorophyll a apoprotein A1 (751 aa).

8 helical membrane passes run 73–96, 159–182, 198–222, 294–312, 349–372, 388–414, 436–458, and 533–551; these read VFSAHFGQLGIIFIWLSGMYFHGA, LYSTAIGGLVMAAAMFFAGWFHFH, LNHHLSGLLGLGSLAWAGHQIHVSL, TAHHHLAIAVLFIVAGHMY, WHAQLAINLALFGSLSIIVAHHQY, LSLFTHHNWIGGFCIVGAAAHAAIFMI, AIISHLNWVCIFLGFHSFGLYIH, and FLVHHVHAFTIHVTVLILL. 2 residues coordinate [4Fe-4S] cluster: C575 and C584. The next 2 membrane-spanning stretches (helical) occupy residues 591–612 and 665–687; these read HVFLGLFWMYNAISVVIFHFSW and LSAYGLIFLGAHFVWAFSLMFLF. Position 676 (H676) interacts with chlorophyll a'. The chlorophyll a site is built by M684 and Y692. Position 693 (W693) interacts with phylloquinone. The chain crosses the membrane as a helical span at residues 725–745; the sequence is AVGVAHYLLGGIATTWSFFLA.

Belongs to the PsaA/PsaB family. As to quaternary structure, the PsaA/B heterodimer binds the P700 chlorophyll special pair and subsequent electron acceptors. PSI consists of a core antenna complex that captures photons, and an electron transfer chain that converts photonic excitation into a charge separation. The eukaryotic PSI reaction center is composed of at least 11 subunits. It depends on P700 is a chlorophyll a/chlorophyll a' dimer, A0 is one or more chlorophyll a, A1 is one or both phylloquinones and FX is a shared 4Fe-4S iron-sulfur center. as a cofactor.

It localises to the plastid. The protein resides in the chloroplast thylakoid membrane. The enzyme catalyses reduced [plastocyanin] + hnu + oxidized [2Fe-2S]-[ferredoxin] = oxidized [plastocyanin] + reduced [2Fe-2S]-[ferredoxin]. In terms of biological role, psaA and PsaB bind P700, the primary electron donor of photosystem I (PSI), as well as the electron acceptors A0, A1 and FX. PSI is a plastocyanin/cytochrome c6-ferredoxin oxidoreductase, converting photonic excitation into a charge separation, which transfers an electron from the donor P700 chlorophyll pair to the spectroscopically characterized acceptors A0, A1, FX, FA and FB in turn. Oxidized P700 is reduced on the lumenal side of the thylakoid membrane by plastocyanin or cytochrome c6. In Tupiella akineta (Green alga), this protein is Photosystem I P700 chlorophyll a apoprotein A1.